The sequence spans 544 residues: Serine/threonine-protein kinase PAK 1 (544 aa).

Positions 1 to 79 (MSNNGLDVQD…KERPEISLPS (79 aa)) are disordered. Ser-2 carries the N-acetylserine modification. Phosphoserine; by PKB and autocatalysis is present on Ser-21. Phosphoserine; by autocatalysis is present on Ser-57. Residues 68–79 (KEKERPEISLPS) show a composition bias toward basic and acidic residues. The autoregulatory region stretch occupies residues 70–140 (KERPEISLPS…YNSKKTSNSQ (71 aa)). Residues 75 to 88 (ISLPSDFEHTIHVG) form the CRIB domain. The segment at 75–105 (ISLPSDFEHTIHVGFDAVTGEFTGMPEQWAR) is GTPase-binding. A Phosphothreonine; by OXSR1 modification is found at Thr-84. Residue Ser-115 is modified to Phosphoserine. Phosphotyrosine occurs at positions 131 and 142. Phosphoserine; by autocatalysis is present on residues Ser-144 and Ser-149. A compositionally biased stretch (polar residues) spans 150-166 (AEDYNSSNTLNVKTVSE). Residues 150 to 195 (AEDYNSSNTLNVKTVSETPAVPPVSEDEDDDDDATPPPVIAPRPEH) are disordered. Residue Tyr-153 is modified to Phosphotyrosine; by JAK2. Phosphoserine is present on Ser-174. Residues 174–183 (SEDEDDDDDA) are compositionally biased toward acidic residues. Thr-184 carries the post-translational modification Phosphothreonine. The residue at position 198 (Ser-198) is a Phosphoserine; by autocatalysis. Tyr-200 is subject to Phosphotyrosine; by JAK2. Ser-203 is subject to Phosphoserine; by autocatalysis. Positions 209-250 (PVTPTRDVATSPISPTENNTTPPDALTRNTEKQKKKPKMSDE) are disordered. Residues Thr-211 and Thr-218 each carry the phosphothreonine modification. 2 positions are modified to phosphoserine: Ser-219 and Ser-222. The segment covering 219-230 (SPISPTENNTTP) has biased composition (polar residues). Residues Thr-224, Thr-228, and Thr-229 each carry the phosphothreonine modification. Residues 269–520 (YTRFEKIGQG…AKELLQHQFL (252 aa)) form the Protein kinase domain. Residue 275 to 283 (IGQGASGTV) participates in ATP binding. Tyr-284 carries the phosphotyrosine; by JAK2 modification. Lys-298 contributes to the ATP binding site. Asp-388 serves as the catalytic Proton acceptor. Thr-422 bears the Phosphothreonine; by autocatalysis, BRSK2 and PDPK1 mark.

This sequence belongs to the protein kinase superfamily. STE Ser/Thr protein kinase family. STE20 subfamily. Homodimer in its autoinhibited state. Active as monomer. Interacts with GIT1. Component of cytoplasmic complexes, which also contains PXN, ARHGEF7 and GIT1. Interacts with NISCH. Interacts with DVL1; mediates the formation of a DVL1, MUSK and PAK1 ternary complex involved in AChR clustering. Binds to the caspase-cleaved p110 isoform of CDC2L1 and CDC2L2, p110C, but not the full-length proteins. Interacts with ARHGEF7. Interacts with SCRIB. Interacts with PDPK1. Interacts (via kinase domain) with RAF1. Interacts with NCK1 and NCK2. Interacts with TBCB. Interacts with BRSK2. Interacts tightly with GTP-bound but not GDP-bound CDC42/P21 and RAC1. Interacts with SNAI1. Interacts with CIB1 (via N-terminal region); the interaction is direct, promotes PAK1 activity and occurs in a calcium-dependent manner. Interacts with INPP5K. Interacts with gamma-tubulin. Interacts with RHOU; the interaction promotes PAK1 activation. Mg(2+) serves as cofactor. Autophosphorylated in trans, meaning that in a dimer, one kinase molecule phosphorylates the other one. Activated by autophosphorylation at Thr-422 in response to a conformation change, triggered by interaction with GTP-bound CDC42 or RAC1. Activated by phosphorylation at Thr-422 by PDPK1. Phosphorylated by JAK2 in response to PRL; this increases PAK1 kinase activity. Phosphorylated at Ser-21 by PKB/AKT; this reduces interaction with NCK1 and association with focal adhesion sites. Activated by phosphorylation at Thr-422 by BRSK2. Upon DNA damage, phosphorylated at Thr-211 and translocates to the nucleoplasm. Phosphorylated at tyrosine residues, which can be enhanced by NTN1. As to expression, expressed predominantly in the brain, with higher expression in neuronal groups associated with motor function, and at lower levels in the spleen.

Its subcellular location is the cytoplasm. It is found in the cell junction. The protein localises to the focal adhesion. The protein resides in the cell projection. It localises to the lamellipodium. Its subcellular location is the cell membrane. It is found in the ruffle membrane. The protein localises to the invadopodium. The protein resides in the nucleus. It localises to the nucleoplasm. Its subcellular location is the chromosome. It is found in the cytoskeleton. The protein localises to the microtubule organizing center. The protein resides in the centrosome. The catalysed reaction is L-seryl-[protein] + ATP = O-phospho-L-seryl-[protein] + ADP + H(+). It catalyses the reaction L-threonyl-[protein] + ATP = O-phospho-L-threonyl-[protein] + ADP + H(+). Its activity is regulated as follows. Phosphorylation of Thr-84 by OXSR1 inhibits activation. Activated by binding small G proteins. Binding of GTP-bound CDC42 or RAC1 to the autoregulatory region releases monomers from the autoinhibited dimer, and enables activation by phosphorylation of Thr-422. Its function is as follows. Protein kinase involved in intracellular signaling pathways downstream of integrins and receptor-type kinases that plays an important role in cytoskeleton dynamics, in cell adhesion, migration, proliferation, apoptosis, mitosis, and in vesicle-mediated transport processes. Can directly phosphorylate BAD and protects cells against apoptosis. Activated by interaction with CDC42 and RAC1. Functions as a GTPase effector that links the Rho-related GTPases CDC42 and RAC1 to the JNK MAP kinase pathway. Phosphorylates and activates MAP2K1, and thereby mediates activation of downstream MAP kinases. Involved in the reorganization of the actin cytoskeleton, actin stress fibers and of focal adhesion complexes. Phosphorylates the tubulin chaperone TBCB and thereby plays a role in the regulation of microtubule biogenesis and organization of the tubulin cytoskeleton. Plays a role in the regulation of insulin secretion in response to elevated glucose levels. Part of a ternary complex that contains PAK1, DVL1 and MUSK that is important for MUSK-dependent regulation of AChR clustering during the formation of the neuromuscular junction (NMJ). Activity is inhibited in cells undergoing apoptosis, potentially due to binding of CDC2L1 and CDC2L2. Phosphorylates MYL9/MLC2. Phosphorylates RAF1 at 'Ser-338' and 'Ser-339' resulting in: activation of RAF1, stimulation of RAF1 translocation to mitochondria, phosphorylation of BAD by RAF1, and RAF1 binding to BCL2. Phosphorylates SNAI1 at 'Ser-246' promoting its transcriptional repressor activity by increasing its accumulation in the nucleus. In podocytes, promotes NR3C2 nuclear localization. Required for atypical chemokine receptor ACKR2-induced phosphorylation of LIMK1 and cofilin (CFL1) and for the up-regulation of ACKR2 from endosomal compartment to cell membrane, increasing its efficiency in chemokine uptake and degradation. In synapses, seems to mediate the regulation of F-actin cluster formation performed by SHANK3, maybe through CFL1 phosphorylation and inactivation. Plays a role in RUFY3-mediated facilitating gastric cancer cells migration and invasion. In response to DNA damage, phosphorylates MORC2 which activates its ATPase activity and facilitates chromatin remodeling. In neurons, plays a crucial role in regulating GABA(A) receptor synaptic stability and hence GABAergic inhibitory synaptic transmission through its role in F-actin stabilization. In hippocampal neurons, necessary for the formation of dendritic spines and excitatory synapses; this function is dependent on kinase activity and may be exerted by the regulation of actomyosin contractility through the phosphorylation of myosin II regulatory light chain (MLC). Along with GIT1, positively regulates microtubule nucleation during interphase. Phosphorylates FXR1, promoting its localization to stress granules and activity. Phosphorylates ILK on 'Thr-173' and 'Ser-246', promoting nuclear export of ILK. This Rattus norvegicus (Rat) protein is Serine/threonine-protein kinase PAK 1.